We begin with the raw amino-acid sequence, 644 residues long: uncharacterized protein (644 aa).

Positions 123-644 (VSQQIQHDQH…AVGKKKPTKK (522 aa)) are disordered. Over residues 133–155 (PQYNKHPQNNHHPQNTQHSQNNP) the composition is skewed to low complexity. The span at 159-174 (NINESENKEDLSDRSS) shows a compositional bias: basic and acidic residues. Residues 175–191 (DSANSEESHNSQYSQDS) are compositionally biased toward polar residues. Residues 192–204 (GDSRNYQDSEDNK) are compositionally biased toward basic and acidic residues. Positions 216–233 (NKLIVQRLTNPKITPDTI) are enriched in polar residues. 2 stretches are compositionally biased toward basic and acidic residues: residues 236–249 (SNKD…KDLS) and 256–279 (SIKD…KSKE). Acidic residues-rich tracts occupy residues 292 to 301 (DGDDLDDLGN) and 310 to 338 (SDYE…DDSN). The span at 367-400 (KSPSNSKKSKTNQKLSQSSKKISSKTITNSGSKS) shows a compositional bias: low complexity. The segment covering 447 to 476 (SDDSDNESDNESDNESNNDSDNETDSEIDD) has biased composition (acidic residues). A compositionally biased stretch (low complexity) spans 496–531 (PKTPMKPNNKTTSVSKPVSKPPVKSSIKNNTKNNKP). Residues 544-558 (KQKDQSESQSDKDID) show a composition bias toward basic and acidic residues. Residues 585-594 (PPKSVSLPSS) show a composition bias toward low complexity. The segment covering 607–630 (TAKTQNKSKSQPKTNGSKTSTKSI) has biased composition (polar residues).

This is an uncharacterized protein from Acanthamoeba polyphaga mimivirus (APMV).